We begin with the raw amino-acid sequence, 729 residues long: Probable cyclic di-GMP phosphodiesterase PdeA (729 aa).

The next 8 membrane-spanning stretches (helical) occupy residues 17–37, 41–61, 83–103, 126–146, 163–183, 214–234, 238–258, and 289–309; these read AFTLTVVLIQLSRFISPLAII, YIFLAWMPLCVMLSILFIFGW, FLQTAVMLGSQTFVVLCACAI, FWLGLVTPIGIKCSMYLVGSF, IFTVVDLLSLFTAVLIYNMLF, AFTLSWLAALSVLLLLLCTPY, FIAGYLVPVFFIIFTLGVGKL, and YSLAFILAVLISFSVCLLYMV. A GGDEF domain is found at 348–476; sequence AGKSFCCLRI…AHHHVLALDS (129 aa). The 242-residue stretch at 488–729 folds into the EAL domain; that stretch reads QVLLLNTIRT…LIGRPQPLAD (242 aa).

The protein localises to the cell membrane. The enzyme catalyses 3',3'-c-di-GMP + H2O = 5'-phosphoguanylyl(3'-&gt;5')guanosine + H(+). Phosphodiesterase (PDE) that catalyzes the hydrolysis of cyclic-di-GMP (c-di-GMP) to 5'-pGpG. This is Probable cyclic di-GMP phosphodiesterase PdeA from Escherichia coli (strain K12).